Reading from the N-terminus, the 221-residue chain is Cytidylate kinase 1 (221 aa).

An ATP-binding site is contributed by 7–15; sequence GPSASGKSS.

Belongs to the cytidylate kinase family. Type 1 subfamily.

Its subcellular location is the cytoplasm. It catalyses the reaction CMP + ATP = CDP + ADP. It carries out the reaction dCMP + ATP = dCDP + ADP. This Borreliella afzelii (strain PKo) (Borrelia afzelii) protein is Cytidylate kinase 1.